The following is a 133-amino-acid chain: Large ribosomal subunit protein bL20 (133 aa).

This sequence belongs to the bacterial ribosomal protein bL20 family.

Its function is as follows. Binds directly to 23S ribosomal RNA and is necessary for the in vitro assembly process of the 50S ribosomal subunit. It is not involved in the protein synthesizing functions of that subunit. In Rubrobacter xylanophilus (strain DSM 9941 / JCM 11954 / NBRC 16129 / PRD-1), this protein is Large ribosomal subunit protein bL20.